A 299-amino-acid chain; its full sequence is MNKGFVSGEEFARWYATARQMAIAHGIETGELNWLLQGWTDLDRLTLRLQDFAHREIALQETWENIQRGWRRRVEEKYPVQYLLGQTQWRDFVIKVTDDVLIPRPETELIIDIVQHEHSALSPSNCADHWVDLGTGSGAIALGLAATFPQALVHAVDCSGSALAIARENAQLNQFGDRIQFHQGYWWEPLEHLKGQVQGMVSNPPYIPQRELAQLQPEVIKHEPLLALDGGPDGLQAVEQLIRRSPTYLKPGGFWLVEIMTGQAPMVAELLRASGAYQDIQIHRDLASIERFVSARTLS.

Residues 134 to 138 (GTGSG), Asp157, Trp186, and Asn203 contribute to the S-adenosyl-L-methionine site. 203–206 (NPPY) is a binding site for substrate.

The protein belongs to the protein N5-glutamine methyltransferase family. PrmC subfamily.

It catalyses the reaction L-glutaminyl-[peptide chain release factor] + S-adenosyl-L-methionine = N(5)-methyl-L-glutaminyl-[peptide chain release factor] + S-adenosyl-L-homocysteine + H(+). Functionally, methylates the class 1 translation termination release factors RF1/PrfA and RF2/PrfB on the glutamine residue of the universally conserved GGQ motif. The polypeptide is Release factor glutamine methyltransferase (Synechocystis sp. (strain ATCC 27184 / PCC 6803 / Kazusa)).